Reading from the N-terminus, the 191-residue chain is Cathelicidin-related peptide Oh-Cath (191 aa).

Positions 1–22 (MEGFFWKTLLVVGALAIGGTSS) are cleaved as a signal peptide. Positions 23 to 161 (LPHKPLTYEE…DQPRRVKRFK (139 aa)) are excised as a propeptide. Disulfide bonds link cysteine 81–cysteine 92 and cysteine 103–cysteine 120. The segment covering 125–151 (EEEEQKQEEGNEEEKEVEKEEKEEDEK) has biased composition (acidic residues). Residues 125–154 (EEEEQKQEEGNEEEKEVEKEEKEEDEKDQP) are disordered.

It belongs to the cathelicidin family. In terms of tissue distribution, expressed by the venom gland.

It localises to the secreted. Its subcellular location is the target cell membrane. In terms of biological role, potent antimicrobial peptide against Gram-negative (MIC=0.25 ug/ml against E.coli ATCC 25922, MIC=0.5 ug/ml against P.aeruginosa) and Gram-positive bacteria (MIC=64 ug/ml against E.faecalis, MIC=64 ug/ml against S.aureus). Adopts an amphipathic alpha helical conformation, that may allow to partition into the target membrane. Low hemolytic activities have been observed on mammalian cells. The polypeptide is Cathelicidin-related peptide Oh-Cath (Ophiophagus hannah (King cobra)).